The sequence spans 102 residues: RNA-binding protein Hfq (102 aa).

One can recognise a Sm domain in the interval 9-68 (DPFLNALRRERVPVSIYLVNGIKLQGQIESFDQFVILLKNTVSQMVYKHAISTVVPSRPV). The disordered stretch occupies residues 63–102 (VPSRPVSHHSNNTGGGSNNYHHGSSPAPSSQPQQDSADAE). Residues 70 to 102 (HHSNNTGGGSNNYHHGSSPAPSSQPQQDSADAE) are compositionally biased toward low complexity.

It belongs to the Hfq family. In terms of assembly, homohexamer.

In terms of biological role, RNA chaperone that binds small regulatory RNA (sRNAs) and mRNAs to facilitate mRNA translational regulation in response to envelope stress, environmental stress and changes in metabolite concentrations. Also binds with high specificity to tRNAs. This chain is RNA-binding protein Hfq, found in Erwinia tasmaniensis (strain DSM 17950 / CFBP 7177 / CIP 109463 / NCPPB 4357 / Et1/99).